The sequence spans 654 residues: tRNA uridine 5-carboxymethylaminomethyl modification enzyme MnmG (654 aa).

17 to 22 (GGGHAG) provides a ligand contact to FAD. NAD(+) is bound at residue 289–303 (GPRYCPSIEDKIVKF).

It belongs to the MnmG family. In terms of assembly, homodimer. Heterotetramer of two MnmE and two MnmG subunits. It depends on FAD as a cofactor.

It is found in the cytoplasm. Functionally, NAD-binding protein involved in the addition of a carboxymethylaminomethyl (cmnm) group at the wobble position (U34) of certain tRNAs, forming tRNA-cmnm(5)s(2)U34. This chain is tRNA uridine 5-carboxymethylaminomethyl modification enzyme MnmG, found in Prochlorococcus marinus (strain MIT 9515).